A 246-amino-acid chain; its full sequence is Bis(5'-nucleosyl)-tetraphosphatase PrpE [asymmetrical] (246 aa).

It belongs to the PrpE family. The cofactor is Ni(2+).

The enzyme catalyses P(1),P(4)-bis(5'-guanosyl) tetraphosphate + H2O = GMP + GTP + 2 H(+). In terms of biological role, asymmetrically hydrolyzes Ap4p to yield AMP and ATP. The chain is Bis(5'-nucleosyl)-tetraphosphatase PrpE [asymmetrical] from Bacillus anthracis (strain A0248).